A 276-amino-acid polypeptide reads, in one-letter code: Mitochondrial outer membrane protein porin 6 (276 aa).

This sequence belongs to the eukaryotic mitochondrial porin (TC 1.B.8.1) family.

The protein resides in the mitochondrion outer membrane. Functionally, forms a channel through the mitochondrial outer membrane that allows diffusion of small hydrophilic molecules. The channel adopts an open conformation at low or zero membrane potential and a closed conformation at potentials above 30-40 mV. The open state has a weak anion selectivity whereas the closed state is cation-selective. The chain is Mitochondrial outer membrane protein porin 6 (VDAC6) from Oryza sativa subsp. japonica (Rice).